Here is a 580-residue protein sequence, read N- to C-terminus: MTNHEQVLTDYLAAFIEELVQAGVKEAIISPGSRSTPLALMMAEHPILKIYVDVDERSAGFFALGLAKASKRPVVLLSTSGTAAANYFPAIAEANLSQIPLIILTADRPHELRNVGAPQAMDQLHLYGSHVKDFTDMALPENSDEMLRYAKWHGSRAVDIAMKTPRGPVHLNFPLREPLVPILEPSPYTATGKKHHHVHIYYTHEVLDDSSIQKMVTDCTGKKGVFVVGPIDKKEIEQPMVDLAKKLGWPILADPLSGLRSYGAKDDVVIDQYDAFLKEAAIWDNLTPEVVIRFGSMPVSKPLKNWLEQLSDIRFYVVDPGAAWKDPIKAVTDMIHCDERFLLDIMQKNMPDDTKISAWLNRWTAYNQTAREIVLTEMENTTTLEEGKIVAELRRLLPDKAGLFIGNSMPIRDVDTYFSQIDKKIKMLANRGANGIDGVVSSALGASVVFQPMFLLIGDLSFYHDMNGLLMAKKYKMNLTIIIVNNDGGGIFSFLPQAKEPKYFESLFGTSTELDFRFAAAFYDGDYHEAKSVDELEEAVDKATYHKGLDIIEVKTNRHENKANHQALWDKIATGLKALD.

Belongs to the TPP enzyme family. MenD subfamily. Homodimer. The cofactor is Mg(2+). Requires Mn(2+) as cofactor. It depends on thiamine diphosphate as a cofactor.

The enzyme catalyses isochorismate + 2-oxoglutarate + H(+) = 5-enolpyruvoyl-6-hydroxy-2-succinyl-cyclohex-3-ene-1-carboxylate + CO2. The protein operates within quinol/quinone metabolism; 1,4-dihydroxy-2-naphthoate biosynthesis; 1,4-dihydroxy-2-naphthoate from chorismate: step 2/7. It functions in the pathway quinol/quinone metabolism; menaquinone biosynthesis. Catalyzes the thiamine diphosphate-dependent decarboxylation of 2-oxoglutarate and the subsequent addition of the resulting succinic semialdehyde-thiamine pyrophosphate anion to isochorismate to yield 2-succinyl-5-enolpyruvyl-6-hydroxy-3-cyclohexene-1-carboxylate (SEPHCHC). This Listeria welshimeri serovar 6b (strain ATCC 35897 / DSM 20650 / CCUG 15529 / CIP 8149 / NCTC 11857 / SLCC 5334 / V8) protein is 2-succinyl-5-enolpyruvyl-6-hydroxy-3-cyclohexene-1-carboxylate synthase.